A 352-amino-acid chain; its full sequence is tRNA pseudouridine synthase D (352 aa).

Asp81 serves as the catalytic Nucleophile. Positions 157-303 constitute a TRUD domain; the sequence is GIPNYFGVQR…MEHERRILRL (147 aa).

It belongs to the pseudouridine synthase TruD family.

The enzyme catalyses uridine(13) in tRNA = pseudouridine(13) in tRNA. In terms of biological role, responsible for synthesis of pseudouridine from uracil-13 in transfer RNAs. This chain is tRNA pseudouridine synthase D, found in Pseudomonas syringae pv. tomato (strain ATCC BAA-871 / DC3000).